The primary structure comprises 348 residues: Phospho-N-acetylmuramoyl-pentapeptide-transferase (348 aa).

10 helical membrane passes run 11–31 (SLIL…IFLG), 67–87 (TAGG…LLPL), 92–112 (TWLF…DDIV), 128–148 (FIVQ…IDKE), 163–183 (IFLG…MLAI), 198–218 (GLAT…AIMS), 222–242 (PLAY…LAFL), 251–271 (VFMG…CAVM), 276–296 (LFLI…ILQV), and 326–346 (VVAR…VAAL).

It belongs to the glycosyltransferase 4 family. MraY subfamily. Mg(2+) is required as a cofactor.

It localises to the cell inner membrane. The catalysed reaction is UDP-N-acetyl-alpha-D-muramoyl-L-alanyl-gamma-D-glutamyl-meso-2,6-diaminopimeloyl-D-alanyl-D-alanine + di-trans,octa-cis-undecaprenyl phosphate = di-trans,octa-cis-undecaprenyl diphospho-N-acetyl-alpha-D-muramoyl-L-alanyl-D-glutamyl-meso-2,6-diaminopimeloyl-D-alanyl-D-alanine + UMP. It functions in the pathway cell wall biogenesis; peptidoglycan biosynthesis. Catalyzes the initial step of the lipid cycle reactions in the biosynthesis of the cell wall peptidoglycan: transfers peptidoglycan precursor phospho-MurNAc-pentapeptide from UDP-MurNAc-pentapeptide onto the lipid carrier undecaprenyl phosphate, yielding undecaprenyl-pyrophosphoryl-MurNAc-pentapeptide, known as lipid I. The protein is Phospho-N-acetylmuramoyl-pentapeptide-transferase of Chlamydia felis (strain Fe/C-56) (Chlamydophila felis).